Consider the following 242-residue polypeptide: N-glycosylase/DNA lyase (242 aa).

8-oxoguanine contacts are provided by Q26, S53, and W64. The tract at residues 120 to 184 (EGYYKNMKML…EDLRIKSVTS (65 aa)) is helix-hairpin-helix. Residue K144 is the Schiff-base intermediate with DNA of the active site. 2 residues coordinate 8-oxoguanine: F148 and P174. D176 is a catalytic residue. 8-oxoguanine is bound by residues D210 and W214.

Belongs to the archaeal N-glycosylase/DNA lyase (AGOG) family.

It catalyses the reaction 2'-deoxyribonucleotide-(2'-deoxyribose 5'-phosphate)-2'-deoxyribonucleotide-DNA = a 3'-end 2'-deoxyribonucleotide-(2,3-dehydro-2,3-deoxyribose 5'-phosphate)-DNA + a 5'-end 5'-phospho-2'-deoxyribonucleoside-DNA + H(+). Its function is as follows. DNA repair enzyme that is part of the base excision repair (BER) pathway; protects from oxidative damage by removing the major product of DNA oxidation, 8-oxoguanine (GO), from single- and double-stranded DNA substrates. This chain is N-glycosylase/DNA lyase, found in Pyrococcus furiosus (strain ATCC 43587 / DSM 3638 / JCM 8422 / Vc1).